The chain runs to 160 residues: Glucan endo-1,3-beta-glucosidase, acidic isoform PR-O (160 aa).

Glutamate 81 acts as the Nucleophile in catalysis.

It belongs to the glycosyl hydrolase 17 family. In terms of processing, the N-terminus is blocked.

It localises to the secreted. Its subcellular location is the extracellular space. It catalyses the reaction Hydrolysis of (1-&gt;3)-beta-D-glucosidic linkages in (1-&gt;3)-beta-D-glucans.. Functionally, implicated in the defense of plants against pathogens. This Nicotiana tabacum (Common tobacco) protein is Glucan endo-1,3-beta-glucosidase, acidic isoform PR-O (PR0).